The chain runs to 306 residues: Non-specific ribonucleoside hydrolase RihC (306 aa).

His235 is a catalytic residue.

This sequence belongs to the IUNH family. RihC subfamily.

Hydrolyzes both purine and pyrimidine ribonucleosides with a broad-substrate specificity. In Salmonella schwarzengrund (strain CVM19633), this protein is Non-specific ribonucleoside hydrolase RihC.